A 218-amino-acid polypeptide reads, in one-letter code: LHFPL tetraspan subfamily member 3 protein (218 aa).

4 helical membrane passes run 22 to 42 (IGVL…VCFI), 96 to 116 (FFIG…GLFF), 126 to 146 (ICAW…MIFP), and 177 to 197 (ILAI…FVLG).

Belongs to the LHFP family.

The protein resides in the membrane. The chain is LHFPL tetraspan subfamily member 3 protein from Xenopus laevis (African clawed frog).